A 550-amino-acid polypeptide reads, in one-letter code: Cell pattern formation-associated protein STUA (550 aa).

Residues 86 to 192 (RVTATLWEDE…HNIGALLYHP (107 aa)) form the HTH APSES-type domain. A DNA-binding region (H-T-H motif) is located at residues 120–141 (GTKLLNVAGMTRGRRDGILKSE). The segment covering 246-266 (SLANGPQSLASTPQPLTNGSQ) has biased composition (polar residues). 4 disordered regions span residues 246-277 (SLANGPQSLASTPQPLTNGSQPPMPNGGGMLK), 371-412 (HHQP…VKRR), 447-467 (KRRDDEAETPRPGPNVHDHLN), and 527-550 (APVYDTGARPPSAISAPRRQQSFG). Over residues 385–395 (RGRDEDDDVHR) the composition is skewed to basic and acidic residues. The nuclear localization domain stretch occupies residues 517 to 546 (TVAASPSYPSAPVYDTGARPPSAISAPRRQ).

The protein belongs to the EFG1/PHD1/stuA family.

The protein resides in the nucleus. Functionally, transcription factor that regulates asexual reproduction. Binds the StuA-response elements (StRE) with the consensus sequence 5'-(A/T)CGCG(T/A)N(A/C)-3' at the promoters of target genes. Differentially regulates the development of macroconidia, microconidia, and chlamydospores. Acts as a positive regulator for the development of macroconidia and as a negative regulator for the development of chlamydospores. Involved in microconidium formation specifically in infected plants. The polypeptide is Cell pattern formation-associated protein STUA (Fusarium oxysporum (Fusarium vascular wilt)).